The primary structure comprises 529 residues: uncharacterized protein (529 aa).

In terms of domain architecture, Radical SAM core spans 157-410 (DFPHIICEIE…FKNRVRENID (254 aa)). Cys-171, Cys-176, and Cys-179 together coordinate [4Fe-4S] cluster.

[4Fe-4S] cluster is required as a cofactor.

This is an uncharacterized protein from Archaeoglobus fulgidus (strain ATCC 49558 / DSM 4304 / JCM 9628 / NBRC 100126 / VC-16).